A 708-amino-acid polypeptide reads, in one-letter code: C-Jun-amino-terminal kinase-interacting protein 1 (708 aa).

Positions 1 to 26 (MAERESGLSGGAASPPAASPFLGLHI) are disordered. The span at 11–24 (GAASPPAASPFLGL) shows a compositional bias: low complexity. A phosphoserine mark is found at Ser-14, Ser-28, and Ser-39. Residues 69-368 (PPRAGLLSAG…PPRASLSSDT (300 aa)) form a disordered region. The segment covering 71–87 (RAGLLSAGSSGSAGSRL) has biased composition (low complexity). The residue at position 103 (Thr-103) is a Phosphothreonine; by MAPK8, MAPK9 and MAPK10. Positions 105–116 (GAEDDEEDDDEL) are enriched in acidic residues. The interval 126–282 (SKAESGQEPA…EATEEIYLTP (157 aa)) is JNK-binding domain (JBD). Residue Ser-149 is modified to Phosphoserine. A minimal inhibitory domain (MID) region spans residues 154–173 (RPKRPTTLNLFPQVPRSQDT). The span at 159 to 179 (TTLNLFPQVPRSQDTLNNNSL) shows a compositional bias: polar residues. A phosphoserine mark is found at Ser-178, Ser-184, Ser-190, Ser-192, and Ser-193. Polar residues predominate over residues 191-201 (RSSSPLKTGEQ). Position 202 is a phosphothreonine; by MAPK8, MAPK9 and MAPK10 (Thr-202). A Phosphoserine modification is found at Ser-211. The segment covering 220–232 (PVPTQDRGTSTDS) has biased composition (polar residues). Residues 264-274 (IHYQADVRLEA) show a composition bias toward basic and acidic residues. The interaction with MAP3K7 stretch occupies residues 280–468 (LTPVQRPPDP…NVFMSGRSRS (189 aa)). The segment covering 292 to 308 (PTSTFLPPTESRMSVSS) has biased composition (polar residues). Phosphoserine is present on residues Ser-308, Ser-325, Ser-327, Ser-337, Ser-352, Ser-363, Ser-366, Ser-404, and Ser-406. Short sequence motifs (D-box) lie at residues 350-357 (RGSLGEPP) and 361-369 (RASLSSDTS). Thr-408 carries the post-translational modification Phosphothreonine. The disordered stretch occupies residues 426-448 (EEYEEAPQPRPPTCLSEDSTPDE). 2 positions are modified to phosphoserine: Ser-441 and Ser-444. Thr-445 is modified (phosphothreonine). Ser-466, Ser-468, Ser-469, and Ser-470 each carry phosphoserine. An interaction with VRK2 region spans residues 468–657 (SSSAESFGLF…PKNNKYFGFI (190 aa)). Positions 485-546 (EHEQTHRAIF…PAYYAIEVTK (62 aa)) constitute an SH3 domain. The PID domain maps to 558-697 (SDWIDQFRVK…FQQFYKQFVE (140 aa)).

The protein belongs to the JIP scaffold family. Forms homo- or heterooligomeric complexes. Binds specific components of the JNK signaling pathway namely MAPK8/JNK1, MAPK9/JNK2, MAPK10/JNK3, MAP2K7/MKK7, MAP3K11/MLK3 and DLK1. Also binds the proline-rich domain-containing splice variant of apolipoprotein E receptor 2 (ApoER2). Interacts, via the PID domain, with ARHGEF28. Binds the cytoplasmic tails of LRP1 and LRP2 (Megalin). Binds the TPR motif-containing C-terminal of kinesin light chain, KLC1. Pre-assembled MAPK8IP1 scaffolding complexes are then transported as a cargo of kinesin, to the required subcellular location. Interacts with the cytoplasmic domain of APP. Interacts with DCLK2, VRK2 and MAP3K7/TAK1. Found in a complex with SH3RF1, RAC1, MAP3K11/MLK3, MAP2K7/MKK7 and MAPK8/JNK1. Found in a complex with SH3RF1, RAC2, MAP3K7/TAK1, MAP2K7/MKK7, MAPK8/JNK1 and MAPK9/JNK2. Interacts with SH3RF2. In terms of processing, phosphorylated by MAPK8, MAPK9 and MAPK10. Phosphorylation on Thr-103 is also necessary for the dissociation and activation of MAP3K12. Phosphorylated by VRK2. Hyperphosphorylated during mitosis following activation of stress-activated and MAP kinases. Post-translationally, ubiquitinated. Two preliminary events are required to prime for ubiquitination; phosphorylation and an increased in intracellular calcium concentration. Then, the calcium influx initiates ubiquitination and degradation by the ubiquitin-proteasome pathway. Highly expressed in brain and pancreatic beta-cells. Weaker expression found in kidney.

It localises to the cytoplasm. It is found in the perinuclear region. The protein resides in the nucleus. Its subcellular location is the endoplasmic reticulum membrane. The protein localises to the mitochondrion membrane. Its function is as follows. The JNK-interacting protein (JIP) group of scaffold proteins selectively mediates JNK signaling by aggregating specific components of the MAPK cascade to form a functional JNK signaling module. Required for JNK activation in response to excitotoxic stress. Cytoplasmic MAPK8IP1 causes inhibition of JNK-regulated activity by retaining JNK in the cytoplasm and thus inhibiting the JNK phosphorylation of c-Jun. May also participate in ApoER2-specific reelin signaling. Directly, or indirectly, regulates GLUT2 gene expression and beta-cell function. Appears to have a role in cell signaling in mature and developing nerve terminals. May function as a regulator of vesicle transport, through interactions with the JNK-signaling components and motor proteins. Functions as an anti-apoptotic protein and whose level seems to influence the beta-cell death or survival response. Acts as a scaffold protein that coordinates with SH3RF1 in organizing different components of the JNK pathway, including RAC1 or RAC2, MAP3K11/MLK3 or MAP3K7/TAK1, MAP2K7/MKK7, MAPK8/JNK1 and/or MAPK9/JNK2 into a functional multiprotein complex to ensure the effective activation of the JNK signaling pathway. Regulates the activation of MAPK8/JNK1 and differentiation of CD8(+) T-cells. The protein is C-Jun-amino-terminal kinase-interacting protein 1 (Mapk8ip1) of Rattus norvegicus (Rat).